The primary structure comprises 1052 residues: 3-hydroxy-3-methylglutaryl coenzyme A reductase mokG (1052 aa).

A run of 6 helical transmembrane segments spans residues 223 to 243, 253 to 273, 279 to 299, 349 to 369, 378 to 398, and 440 to 460; these read VDMAIIGLGYLALNMTLVSLF, FWLAASVLLSGAFAFVFGLGV, VPVDMLLLSEGIPFLVLTVGF, GWSIVQSYLLEIGALALGAVF, FCFLAAWMVLFDAILLFTFYA, and WKLIMVGGFVLFNVLQLSSFF. Positions 224-403 constitute an SSD domain; that stretch reads DMAIIGLGYL…FTFYATILCV (180 aa). A linker region spans residues 461–617; it reads YRIMGGFMTN…FKANQAESLT (157 aa). Positions 571 to 594 are disordered; the sequence is APKESAAPAPPSSPASVPSAVPVP. A compositionally biased stretch (low complexity) spans 584 to 594; sequence PASVPSAVPVP. The tract at residues 618 to 1044 is catalytic; the sequence is DDELAELCLR…LVNAHMRHNR (427 aa). Glu-734 (charge relay system) is an active-site residue. N-linked (GlcNAc...) asparagine glycosylation is present at Asn-798. Residues Lys-867 and Asp-943 each act as charge relay system in the active site. His-1039 functions as the Proton donor in the catalytic mechanism. Residue Asn-1043 is glycosylated (N-linked (GlcNAc...) asparagine).

The protein belongs to the HMG-CoA reductase family.

It is found in the endoplasmic reticulum membrane. It catalyses the reaction (R)-mevalonate + 2 NADP(+) + CoA = (3S)-3-hydroxy-3-methylglutaryl-CoA + 2 NADPH + 2 H(+). Its pathway is polyketide biosynthesis; lovastatin biosynthesis. Functionally, HMG-CoA reductase; part of the gene cluster that mediates the biosynthesis of monakolin K, also known as lovastatin, and which acts as a potent competitive inhibitor of HMG-CoA reductase. Monakolin K biosynthesis is performed in two stages. The first stage is catalyzed by the nonaketide synthase mokA, which belongs to type I polyketide synthases and catalyzes the iterative nine-step formation of the polyketide. This PKS stage is completed by the action of dehydrogenase mokE, which catalyzes the NADPH-dependent reduction of the unsaturated tetra-, penta- and heptaketide intermediates that arise during the mokA-mediated biosynthesis of the nonaketide chain and leads to dihydromonacolin L. Covalently bound dihydromonacolin L is released from mokA by the mokD esterase. Conversion of dihydromonacolin L into monacolin L and then monacolin J is subsequently performed with the participation of molecular oxygen and P450 monoogygenase mokC. Finally, mokF performs the conversion of monacoline J to monacoline K through the addition of the side-chain diketide moiety (2R)-2-methylbutanoate produced by the diketide synthase mokB. HMG-CoA reductase mokG may act as a down-regulator of monacolin K production. In Monascus pilosus (Red mold), this protein is 3-hydroxy-3-methylglutaryl coenzyme A reductase mokG.